The primary structure comprises 542 residues: Aspartate kinase FUB3 (542 aa).

ACT domains lie at 404 to 472 (ILSN…VLPD) and 478 to 542 (LVGA…KSAI).

The protein belongs to the aspartokinase family.

It catalyses the reaction L-aspartate + ATP = 4-phospho-L-aspartate + ADP. It functions in the pathway mycotoxin biosynthesis. Its function is as follows. Aspartate kinase; part of the gene cluster that mediates the biosynthesis of fusaric acid, a mycotoxin with low to moderate toxicity to animals and humans, but with high phytotoxic properties. L-aspartate is suggested as fusaric acid amino acid precursor that is activated and further processed to O-acetyl-L-homoserine by cluster enzymes aspartate kinase FUB3 and homoserine O-acetyltransferase FUB5, as well as enzymes of the primary metabolism. The polyketide synthase (PKS) FUB1 generates the triketide trans-2-hexenal which is presumptively released by the hydrolase FUB4 and linked to the NRPS-bound amino acid precursor by NAD(P)-dependent dehydrogenase FUB6. FUB1, FUB4, and the non-canonical NRPS Fub8 may form an enzyme complex. Further processing of the NRPS-bound intermediate might be carried out by FUB6 and the sulfhydrylase FUB7, enabling a spontaneous electrocyclization to close the carbon backbone of fusaric acid. Dihydrofusaric acid is likely to be released via reduction by the thioester reductase (TR) domain of FUB8 whereupon the final oxidation to fusaric acid may (also) be performed by the FMN-dependent dehydrogenase FUB9. The protein is Aspartate kinase FUB3 of Fusarium oxysporum f. sp. lycopersici (strain 4287 / CBS 123668 / FGSC 9935 / NRRL 34936) (Fusarium vascular wilt of tomato).